The sequence spans 284 residues: RCS-specific HTH-type transcriptional activator RclR (284 aa).

The cysteines at positions 21 and 89 are disulfide-linked. Residues 177-278 (PRLGAVIQQM…GCTPGEYRER (102 aa)) enclose the HTH araC/xylS-type domain. DNA-binding regions (H-T-H motif) lie at residues 197 to 218 (ESLA…RDVS) and 245 to 268 (VVVI…VREF).

Oxydation of Cys-21 leads to partial activation of RclR, followed by the formation of an intramolecular disulfide bond between Cys-21 and Cys-89, which stabilizes the active form of RclR. Functionally, involved in reactive chlorine species (RCS) stress resistance. Up-regulates, in response to hypochlorous acid (HOCl), the expression of three genes essential for survival of RCS stress (rclA, rclB and rclC) and its own expression. The polypeptide is RCS-specific HTH-type transcriptional activator RclR (rclR) (Escherichia coli (strain K12)).